The sequence spans 238 residues: Probable 2-phosphosulfolactate phosphatase (238 aa).

It belongs to the ComB family. Mg(2+) is required as a cofactor.

It carries out the reaction (2R)-O-phospho-3-sulfolactate + H2O = (2R)-3-sulfolactate + phosphate. This Clostridium botulinum (strain Eklund 17B / Type B) protein is Probable 2-phosphosulfolactate phosphatase.